Reading from the N-terminus, the 395-residue chain is Elongation factor Tu (395 aa).

Residues lysine 10 to leucine 204 enclose the tr-type G domain. Residues glycine 19–threonine 26 are G1. Glycine 19–threonine 26 serves as a coordination point for GTP. Threonine 26 serves as a coordination point for Mg(2+). The G2 stretch occupies residues glycine 60–asparagine 64. Residues aspartate 81–glycine 84 are G3. Residues aspartate 81–histidine 85 and asparagine 136–aspartate 139 contribute to the GTP site. Residues asparagine 136–aspartate 139 form a G4 region. The segment at serine 174–leucine 176 is G5.

Belongs to the TRAFAC class translation factor GTPase superfamily. Classic translation factor GTPase family. EF-Tu/EF-1A subfamily. In terms of assembly, monomer.

It is found in the cytoplasm. It carries out the reaction GTP + H2O = GDP + phosphate + H(+). Its function is as follows. GTP hydrolase that promotes the GTP-dependent binding of aminoacyl-tRNA to the A-site of ribosomes during protein biosynthesis. The chain is Elongation factor Tu from Acholeplasma laidlawii (strain PG-8A).